The primary structure comprises 183 residues: Potassium-transporting ATPase KdpC subunit (183 aa).

Residues 10–30 (LTVFTLILFAVIYPLAIYGIA) form a helical membrane-spanning segment.

The protein belongs to the KdpC family. As to quaternary structure, the system is composed of three essential subunits: KdpA, KdpB and KdpC.

The protein localises to the cell inner membrane. Functionally, part of the high-affinity ATP-driven potassium transport (or Kdp) system, which catalyzes the hydrolysis of ATP coupled with the electrogenic transport of potassium into the cytoplasm. This subunit acts as a catalytic chaperone that increases the ATP-binding affinity of the ATP-hydrolyzing subunit KdpB by the formation of a transient KdpB/KdpC/ATP ternary complex. The chain is Potassium-transporting ATPase KdpC subunit from Flavobacterium johnsoniae (strain ATCC 17061 / DSM 2064 / JCM 8514 / BCRC 14874 / CCUG 350202 / NBRC 14942 / NCIMB 11054 / UW101) (Cytophaga johnsonae).